The following is a 116-amino-acid chain: Large ribosomal subunit protein bL17 (116 aa).

Belongs to the bacterial ribosomal protein bL17 family. As to quaternary structure, part of the 50S ribosomal subunit. Contacts protein L32.

The protein is Large ribosomal subunit protein bL17 of Helicobacter pylori (strain P12).